The chain runs to 502 residues: Lysine--tRNA ligase (502 aa).

Mg(2+) is bound by residues Glu-410 and Glu-417.

The protein belongs to the class-II aminoacyl-tRNA synthetase family. In terms of assembly, homodimer. The cofactor is Mg(2+).

It localises to the cytoplasm. The enzyme catalyses tRNA(Lys) + L-lysine + ATP = L-lysyl-tRNA(Lys) + AMP + diphosphate. In Photobacterium profundum (strain SS9), this protein is Lysine--tRNA ligase.